A 473-amino-acid chain; its full sequence is Ribosomal RNA small subunit methyltransferase F (473 aa).

Residues 124–130 (ASAPGSK), glutamate 148, aspartate 175, and aspartate 193 contribute to the S-adenosyl-L-methionine site. Cysteine 246 acts as the Nucleophile in catalysis.

Belongs to the class I-like SAM-binding methyltransferase superfamily. RsmB/NOP family.

It localises to the cytoplasm. It carries out the reaction cytidine(1407) in 16S rRNA + S-adenosyl-L-methionine = 5-methylcytidine(1407) in 16S rRNA + S-adenosyl-L-homocysteine + H(+). Its function is as follows. Specifically methylates the cytosine at position 1407 (m5C1407) of 16S rRNA. This is Ribosomal RNA small subunit methyltransferase F from Aliivibrio fischeri (strain ATCC 700601 / ES114) (Vibrio fischeri).